The following is a 590-amino-acid chain: uncharacterized protein (590 aa).

Topologically, residues 1 to 68 (MKFSKPKFSM…SQRVWGPWNY (68 aa)) are cytoplasmic. A helical membrane pass occupies residues 69 to 89 (VAFWLADSVNVNTWMIAGTAV). Residues 90–94 (ESGLS) lie on the Extracellular side of the membrane. A helical membrane pass occupies residues 95 to 115 (WWEAWITVWVGYTIAAFILTI). Residues 116–124 (AGRAGAVYH) are Cytoplasmic-facing. A helical transmembrane segment spans residues 125–145 (ISFPVLSRSSFGIWGSLWPIL). Over 146–149 (NRAV) the chain is Extracellular. A helical membrane pass occupies residues 150 to 170 (MACVWYGVQAWIGGECVTLMI). Residues 171–194 (RSIWPSFSHIPNTMAKSGTETYQW) lie on the Cytoplasmic side of the membrane. The chain crosses the membrane as a helical span at residues 195–215 (VGFFIFWLISNVAIWFPVYQI). Over 216–218 (RHL) the chain is Extracellular. The helical transmembrane segment at 219 to 239 (FTAKSFLAPPAAIAFLIWALV) threads the bilayer. Topologically, residues 240–258 (KAHGAGDAIHAKTQLSTWN) are cytoplasmic. Residues 259–279 (HGWAVTAGIISCLDNFATLIV) traverse the membrane as a helical segment. Topologically, residues 280–298 (NNPDFTRFATTPNAPIFPQ) are extracellular. A helical transmembrane segment spans residues 299–319 (LITIPMGFGITTLIGVLVGSA). At 320-390 (SKSIYGENIW…LCPMFINIRR (71 aa)) the chain is on the cytoplasmic side. A helical membrane pass occupies residues 391–411 (GGYIASIIGICMCPWNLLSSS). Over 412-418 (NSFANSL) the chain is Extracellular. The helical transmembrane segment at 419–439 (SAYAVFLSSFAGILIADYFVI) threads the bilayer. The Cytoplasmic portion of the chain corresponds to 440–467 (RKGYLKVDALYTINPNEPYWFTYGINLR). Residues 468–488 (AFASYICGLLINVVGLAGAVG) form a helical membrane-spanning segment. The Extracellular portion of the chain corresponds to 489–500 (DKVPKAALTMNN). Residues 501-521 (IAYLLGIVTSFLSHLIICKIF) form a helical membrane-spanning segment. Residues 522–590 (PVTACGEKFL…GIDIKESSVF (69 aa)) are Cytoplasmic-facing. A disordered region spans residues 566-590 (VSYDSKEKSDDGKSGGIDIKESSVF).

It belongs to the purine-cytosine permease (2.A.39) family.

Its subcellular location is the cytoplasm. The protein localises to the nucleus. It localises to the membrane. This is an uncharacterized protein from Schizosaccharomyces pombe (strain 972 / ATCC 24843) (Fission yeast).